The primary structure comprises 150 residues: UPF0756 membrane protein PM0771 (150 aa).

4 helical membrane-spanning segments follow: residues 12–34 (LVVL…AAIL), 52–72 (HGIT…IVSG), 79–99 (LAVF…LVAW), and 123–143 (ILGV…AGIL).

The protein belongs to the UPF0756 family.

The protein resides in the cell membrane. In Pasteurella multocida (strain Pm70), this protein is UPF0756 membrane protein PM0771.